A 392-amino-acid polypeptide reads, in one-letter code: uncharacterized protein (392 aa).

A mitochondrion-targeting transit peptide spans 1-34 (MCISSSSLLCGINSLKYASNRVGILIPPFQTASS). The next 8 helical transmembrane spans lie at 115-135 (VAIM…WHWD), 150-172 (FRFM…WWTL), 185-205 (LLVN…KFGV), 208-225 (ALSV…VALQ), 277-297 (ATFV…AVYA), 299-319 (AAIF…VYPV), 321-341 (AGIF…LNYE), and 350-370 (AHVS…PAMW). Residue S292 is the Nucleophile of the active site. H351 is a catalytic residue.

Belongs to the peptidase S54 family.

Its subcellular location is the mitochondrion inner membrane. This is an uncharacterized protein from Schizosaccharomyces pombe (strain 972 / ATCC 24843) (Fission yeast).